The primary structure comprises 702 residues: Ribosomal RNA large subunit methyltransferase K/L (702 aa).

A THUMP domain is found at 43–154 (LVYQSLMWSR…KETASIALDL (112 aa)).

It belongs to the methyltransferase superfamily. RlmKL family.

The protein localises to the cytoplasm. It carries out the reaction guanosine(2445) in 23S rRNA + S-adenosyl-L-methionine = N(2)-methylguanosine(2445) in 23S rRNA + S-adenosyl-L-homocysteine + H(+). The catalysed reaction is guanosine(2069) in 23S rRNA + S-adenosyl-L-methionine = N(2)-methylguanosine(2069) in 23S rRNA + S-adenosyl-L-homocysteine + H(+). Its function is as follows. Specifically methylates the guanine in position 2445 (m2G2445) and the guanine in position 2069 (m7G2069) of 23S rRNA. This chain is Ribosomal RNA large subunit methyltransferase K/L, found in Escherichia coli O139:H28 (strain E24377A / ETEC).